Consider the following 59-residue polypeptide: Large ribosomal subunit protein bL32c (59 aa).

Residues K36–K59 are disordered.

The protein belongs to the bacterial ribosomal protein bL32 family.

The protein localises to the plastid. It is found in the chloroplast. This chain is Large ribosomal subunit protein bL32c, found in Oryza nivara (Indian wild rice).